A 391-amino-acid chain; its full sequence is Phosphoglycerate kinase (391 aa).

Substrate-binding positions include 21–23, Arg36, 59–62, Arg113, and Arg146; these read DLN and HLGR. Residues Lys197, Glu319, and 345–348 each bind ATP; that span reads GGDT.

It belongs to the phosphoglycerate kinase family. In terms of assembly, monomer.

The protein localises to the cytoplasm. The catalysed reaction is (2R)-3-phosphoglycerate + ATP = (2R)-3-phospho-glyceroyl phosphate + ADP. It functions in the pathway carbohydrate degradation; glycolysis; pyruvate from D-glyceraldehyde 3-phosphate: step 2/5. This is Phosphoglycerate kinase from Shewanella sediminis (strain HAW-EB3).